We begin with the raw amino-acid sequence, 170 residues long: Probable inactive uracil-DNA glycosylase, mitochondrial (170 aa).

Residues 1-53 constitute a mitochondrion transit peptide; the sequence is MALSTPKTLMDFFQPAKRLKASPSSSSSFPAVSVAGRSRDLGSVANSPPRVTV.

It belongs to the uracil-DNA glycosylase (UDG) superfamily. UNG family.

It localises to the mitochondrion. Probable inactive paralog of AtUNG (AC Q9LIH6) generated by a gene duplication event and subsequently disrupted by at least two transposon insertions. The sequence is that of Probable inactive uracil-DNA glycosylase, mitochondrial from Arabidopsis thaliana (Mouse-ear cress).